A 118-amino-acid polypeptide reads, in one-letter code: Large ribosomal subunit protein uL23c (118 aa).

The protein belongs to the universal ribosomal protein uL23 family. Part of the 50S ribosomal subunit.

The protein localises to the plastid. Its subcellular location is the chloroplast. Functionally, binds to 23S rRNA. The protein is Large ribosomal subunit protein uL23c (rpl23) of Stigeoclonium helveticum (Green alga).